Reading from the N-terminus, the 139-residue chain is Large ribosomal subunit protein uL16 (139 aa).

Belongs to the universal ribosomal protein uL16 family. As to quaternary structure, part of the 50S ribosomal subunit.

Its function is as follows. Binds 23S rRNA and is also seen to make contacts with the A and possibly P site tRNAs. The polypeptide is Large ribosomal subunit protein uL16 (Picosynechococcus sp. (strain ATCC 27264 / PCC 7002 / PR-6) (Agmenellum quadruplicatum)).